Here is a 274-residue protein sequence, read N- to C-terminus: Momilactone A synthase (274 aa).

The protein belongs to the short-chain dehydrogenases/reductases (SDR) family.

The catalysed reaction is 3beta-hydroxy-9beta-pimara-7,15-dien-19,6beta-olide + NAD(+) = momilactone A + NADH + H(+). The enzyme catalyses 3beta-hydroxy-9beta-pimara-7,15-dien-19,6beta-olide + NADP(+) = momilactone A + NADPH + H(+). Its function is as follows. Involved in momilactone phytoalexins biosynthesis. Catalyzes the last step of momilactone A biosynthesis. This chain is Momilactone A synthase, found in Oryza sativa subsp. japonica (Rice).